The following is a 750-amino-acid chain: Methylmalonyl-CoA mutase, mitochondrial (750 aa).

The N-terminal 32 residues, 1 to 32 (MLRAKNQLFLLSPHYLRQVKESSGSRLIQQRL), are a transit peptide targeting the mitochondrion. Q50 serves as a coordination point for malonyl-CoA. K89 bears the N6-acetyllysine mark. Malonyl-CoA-binding positions include 96–99 (YPTM) and 106–110 (TIRQY). Residue K212 is modified to N6-acetyllysine. Residues 216 to 218 (TIQ), R228, K255, H265, and 304 to 306 (RLS) each bind malonyl-CoA. Position 335 is an N6-acetyllysine (K335). K343 is modified (N6-succinyllysine). S481 carries the post-translational modification Phosphoserine. Position 595 is an N6-succinyllysine (K595). An N6-acetyllysine modification is found at K602. In terms of domain architecture, B12-binding spans 614–746 (RPRLLVAKMG…DDIEKCLEKK (133 aa)). H627 contributes to the adenosylcob(III)alamin binding site.

The protein belongs to the methylmalonyl-CoA mutase family. In terms of assembly, homodimer. Interacts (the apoenzyme form) with MMAA; the interaction is GTP dependent. Adenosylcob(III)alamin is required as a cofactor.

It localises to the mitochondrion matrix. Its subcellular location is the mitochondrion. It is found in the cytoplasm. The catalysed reaction is (R)-methylmalonyl-CoA = succinyl-CoA. Its activity is regulated as follows. During catalysis, accumulation of oxidized inactive cofactor hydroxocobalamin (OH2Cbl) leads to loss of MMUT activity. Interaction with MMAA decreases the rate of OH2Cbl formation and promotes the replacement of OH2Cbl by the active cofactor adenosylcobalamin (AdoCbl), thereby restoring MMUT activity. Inhibited by itaconyl-CoA, a metabolite that inactivates the coenzyme B12 cofactor. Inhibited at high concentration of substrate. In terms of biological role, catalyzes the reversible isomerization of methylmalonyl-CoA (MMCoA) (generated from branched-chain amino acid metabolism and degradation of dietary odd chain fatty acids and cholesterol) to succinyl-CoA (3-carboxypropionyl-CoA), a key intermediate of the tricarboxylic acid cycle. This chain is Methylmalonyl-CoA mutase, mitochondrial, found in Homo sapiens (Human).